Consider the following 157-residue polypeptide: MKVGIYPGSFDPITNGHIDIIKRASEIYDRVIVSVMQNPNKNPMFTLGERVALIEQIIQPYSNIEVDCFSGLLIDYAREKGAKVIIKGLRAVSDFEYELQMALMNRKLCPEVETVFLMTNSQYSYLSSSLVKEVAKFKGDVSEFVPEIVLQAMSKKS.

Ser9 contacts substrate. ATP-binding positions include 9-10 (SF) and His17. Residues Lys41, Leu73, and Lys87 each contribute to the substrate site. Residues 88-90 (GLR), Glu98, and 123-129 (YSYLSSS) each bind ATP.

Belongs to the bacterial CoaD family. As to quaternary structure, homohexamer. Mg(2+) serves as cofactor.

Its subcellular location is the cytoplasm. The enzyme catalyses (R)-4'-phosphopantetheine + ATP + H(+) = 3'-dephospho-CoA + diphosphate. The protein operates within cofactor biosynthesis; coenzyme A biosynthesis; CoA from (R)-pantothenate: step 4/5. Reversibly transfers an adenylyl group from ATP to 4'-phosphopantetheine, yielding dephospho-CoA (dPCoA) and pyrophosphate. The sequence is that of Phosphopantetheine adenylyltransferase from Alkaliphilus metalliredigens (strain QYMF).